The following is a 60-amino-acid chain: MDHRLLEIVACPVCNGKFYYNKERQELICKSDALAYPLCDGIPVLLESEARAIKLDETNS.

This sequence belongs to the UPF0434 family.

In Sodalis glossinidius (strain morsitans), this protein is UPF0434 protein SG0997.